The chain runs to 186 residues: Protein MTH_152 (186 aa).

This sequence belongs to the flavoredoxin family. Homodimer. Requires FMN as cofactor.

This is Protein MTH_152 from Methanothermobacter thermautotrophicus (strain ATCC 29096 / DSM 1053 / JCM 10044 / NBRC 100330 / Delta H) (Methanobacterium thermoautotrophicum).